We begin with the raw amino-acid sequence, 460 residues long: Probable carboxypeptidase ARB_01041 (460 aa).

The first 22 residues, 1 to 22 (MQKTYIWALVSLLASSLVDARS), serve as a signal peptide directing secretion. An N-linked (GlcNAc...) asparagine glycan is attached at N98. A Zn(2+)-binding site is contributed by D175. E207 functions as the Proton acceptor in the catalytic mechanism. Residue E208 coordinates Zn(2+). N395 carries N-linked (GlcNAc...) asparagine glycosylation.

This sequence belongs to the peptidase M20A family. Zn(2+) is required as a cofactor.

The protein resides in the secreted. The protein is Probable carboxypeptidase ARB_01041 of Arthroderma benhamiae (strain ATCC MYA-4681 / CBS 112371) (Trichophyton mentagrophytes).